Reading from the N-terminus, the 359-residue chain is snRNA-activating protein complex subunit 2 (359 aa).

Residues M1–P11 are compositionally biased toward basic residues. Disordered stretches follow at residues M1 to T22, N157 to T221, and T291 to I327.

Part of the SNAPc complex composed of 5 subunits: SNAPC1, SNAPC2, SNAPC3, SNAPC4 and SNAPC5. SNAPC2 interacts with TBP and SNAPC4.

Its subcellular location is the nucleus. In terms of biological role, part of the SNAPc complex required for the transcription of both RNA polymerase II and III small-nuclear RNA genes. Binds to the proximal sequence element (PSE), a non-TATA-box basal promoter element common to these 2 types of genes. Recruits TBP and BRF2 to the U6 snRNA TATA box. This chain is snRNA-activating protein complex subunit 2 (Snapc2), found in Mus musculus (Mouse).